We begin with the raw amino-acid sequence, 209 residues long: Ribosomal RNA large subunit methyltransferase E (209 aa).

Residues Gly63, Trp65, Asp83, Asp99, and Asp124 each contribute to the S-adenosyl-L-methionine site. The active-site Proton acceptor is Lys164.

This sequence belongs to the class I-like SAM-binding methyltransferase superfamily. RNA methyltransferase RlmE family.

It is found in the cytoplasm. It carries out the reaction uridine(2552) in 23S rRNA + S-adenosyl-L-methionine = 2'-O-methyluridine(2552) in 23S rRNA + S-adenosyl-L-homocysteine + H(+). Its function is as follows. Specifically methylates the uridine in position 2552 of 23S rRNA at the 2'-O position of the ribose in the fully assembled 50S ribosomal subunit. In Cronobacter sakazakii (strain ATCC BAA-894) (Enterobacter sakazakii), this protein is Ribosomal RNA large subunit methyltransferase E.